A 284-amino-acid polypeptide reads, in one-letter code: MEMO1 family protein Saci_0089 (284 aa).

The protein belongs to the MEMO1 family.

The polypeptide is MEMO1 family protein Saci_0089 (Sulfolobus acidocaldarius (strain ATCC 33909 / DSM 639 / JCM 8929 / NBRC 15157 / NCIMB 11770)).